A 92-amino-acid chain; its full sequence is Transcription factor S4 (92 aa).

The tract at residues 1–31 is ZR-N; that stretch reads MRFCPKCGSFLKVKGNKMVCSKCGYSDHDVE. The Zn(2+) site is built by Cys-4, Cys-7, Cys-20, and Cys-23. The tract at residues 32–56 is flexible linker; the sequence is KVILKENVAHENDKTIIADGETIEG. The segment at 55–92 is ZR-C; it reads EGRVAISLCPRCGSVRAILLNKKKRLYRCMTCNFVYNI. Residues Cys-63 and Cys-66 each contribute to the Zn(2+) site. Catalysis depends on residues Lys-76, Lys-77, and Lys-78. Zn(2+) is bound by residues Cys-83 and Cys-86.

The protein belongs to the archaeal RpoM/eukaryotic RPA12/RPB9/RPC11 RNA polymerase family. Interacts with RNA polymerase. Zn(2+) serves as cofactor.

A potent inhibitor of RNA polymerase (RNAP) probably involved in viral defense. Destabilizes the transcription pre-initiation complex of TBP, TFB, DNA and RNAP, inhibits abortive transcription initiation, productive initiation and transcription elongation. Increases the RNAP KM for NTPs about 50-fold. Overexpression of TFS1-tip4 (TFS1 with the active tip of this protein, phenocopies this protein) in S.acidocaldarius MW001 leads to severe growth inhibition. When bound to RNAP induces conformational changes that widen the DNA-binding channel, probably destabilizing the interaction of DNA with RNAP. The protein is Transcription factor S4 of Saccharolobus solfataricus (strain ATCC 35092 / DSM 1617 / JCM 11322 / P2) (Sulfolobus solfataricus).